The primary structure comprises 566 residues: Viral IRF3-like protein (566 aa).

Disordered regions lie at residues Pro151 to Cys170 and Gln176 to Asp236.

The protein belongs to the IRF family. In terms of assembly, interacts with host SKP2. Interacts with host USP7.

Plays a role in the inhibition of host immune response. Interferes with the transactivating potential of cellular IRFs IRF3 and IRF7 that play a critical role in the induction of IFNA and IFNB genes. Additionally, interferes with surface major histocompatibility complex class II (MHC-II) antigen presentation. The chain is Viral IRF3-like protein (vIRF-3) from Human herpesvirus 8 type P (isolate GK18) (HHV-8).